The following is a 95-amino-acid chain: Sec-independent protein translocase protein TatA (95 aa).

Residues 1-21 traverse the membrane as a helical segment; that stretch reads MGGISIWQLLIIALIVVLLFG. Residues 50 to 61 show a composition bias toward basic and acidic residues; sequence KALEDNAADKPA. The segment at 50 to 95 is disordered; that stretch reads KALEDNAADKPAADAAKVTETAKVAETAPVAETAEKKAESKGKEQA. Residues 62–81 show a composition bias toward low complexity; the sequence is ADAAKVTETAKVAETAPVAE. Positions 82-95 are enriched in basic and acidic residues; it reads TAEKKAESKGKEQA.

It belongs to the TatA/E family. The Tat system comprises two distinct complexes: a TatABC complex, containing multiple copies of TatA, TatB and TatC subunits, and a separate TatA complex, containing only TatA subunits. Substrates initially bind to the TatABC complex, which probably triggers association of the separate TatA complex to form the active translocon.

It localises to the cell inner membrane. In terms of biological role, part of the twin-arginine translocation (Tat) system that transports large folded proteins containing a characteristic twin-arginine motif in their signal peptide across membranes. TatA could form the protein-conducting channel of the Tat system. In Shewanella halifaxensis (strain HAW-EB4), this protein is Sec-independent protein translocase protein TatA.